The chain runs to 585 residues: Zinc finger protein C11D3.17 (585 aa).

2 C2H2-type zinc fingers span residues 31–53 (FPCDQCAKRFTRHENLTRHKACH) and 59–82 (IPCPYCEIKCKRKDLLKRHIQRFH). The residue at position 553 (Thr-553) is a Phosphothreonine.

It is found in the nucleus. This is Zinc finger protein C11D3.17 from Schizosaccharomyces pombe (strain 972 / ATCC 24843) (Fission yeast).